A 209-amino-acid chain; its full sequence is MIGLIGRKVGMTRVFTEEGVSIPVTVVEVEANRIAQVKTLETDGYAAIQVTAGTKKANRVNKAEAGHFAKAGVEAGRGLWEFRLENGEEFAVGSELTVELFNEVKKVDVTGTSKGKGFQGTVKRWNFRTQDMTHGNSLSHRAPGSIGQCQTPGRVFKGKKMAGHMGAERVTTQNLEIVRVDAERNLLLIKGAVPGATGGNVIVKPAVKA.

N5-methylglutamine is present on Gln-150.

This sequence belongs to the universal ribosomal protein uL3 family. Part of the 50S ribosomal subunit. Forms a cluster with proteins L14 and L19. In terms of processing, methylated by PrmB.

Functionally, one of the primary rRNA binding proteins, it binds directly near the 3'-end of the 23S rRNA, where it nucleates assembly of the 50S subunit. The polypeptide is Large ribosomal subunit protein uL3 (Vibrio vulnificus (strain YJ016)).